We begin with the raw amino-acid sequence, 320 residues long: UV DNA damage endonuclease (320 aa).

It belongs to the uve1/UvsE family.

In terms of biological role, component in a DNA repair pathway. Removal of UV LIGHT damaged nucleotides. Recognizes pyrimidine dimers and cleave a phosphodiester bond immediately 5' to the lesion. This chain is UV DNA damage endonuclease, found in Bacillus velezensis (strain DSM 23117 / BGSC 10A6 / LMG 26770 / FZB42) (Bacillus amyloliquefaciens subsp. plantarum).